The chain runs to 187 residues: Elongation factor P (187 aa).

The protein belongs to the elongation factor P family.

It is found in the cytoplasm. It functions in the pathway protein biosynthesis; polypeptide chain elongation. Involved in peptide bond synthesis. Stimulates efficient translation and peptide-bond synthesis on native or reconstituted 70S ribosomes in vitro. Probably functions indirectly by altering the affinity of the ribosome for aminoacyl-tRNA, thus increasing their reactivity as acceptors for peptidyl transferase. This chain is Elongation factor P, found in Pseudarthrobacter chlorophenolicus (strain ATCC 700700 / DSM 12829 / CIP 107037 / JCM 12360 / KCTC 9906 / NCIMB 13794 / A6) (Arthrobacter chlorophenolicus).